The primary structure comprises 167 residues: MSRKLKKTNLFNKDVSSLLYAYGDVPQPLQATVQCLDELVSGYLVDVCTNAFHTAQNSQRNKLRLEDFKFALRKDPIKLGRAEELIATNKLITEAKKQFNETDNQNSLKRYREEDEEGDEMEEDEDEQQVTDDDEEAAGRNSAKQSTDSKATKIRKQGPKNLKKTKK.

The 65-residue stretch at 10–74 folds into the Histone-fold domain; it reads LFNKDVSSLL…LEDFKFALRK (65 aa). The disordered stretch occupies residues 97–167; sequence KQFNETDNQN…GPKNLKKTKK (71 aa). Residues 109–129 are a coiled coil; it reads KRYREEDEEGDEMEEDEDEQQ. The span at 114-136 shows a compositional bias: acidic residues; the sequence is EDEEGDEMEEDEDEQQVTDDDEE. Phosphothreonine is present on Thr131. Basic residues predominate over residues 152–167; that stretch reads TKIRKQGPKNLKKTKK.

The protein belongs to the TAF13 family. As to quaternary structure, in TFIID, TAF13 heterodimerizes with TAF11, but they do not seem to form a heterotetramer like TAF6/TAF9. The 1.2 MDa TFIID complex is composed of TATA binding protein (TBP) and the 14 TBP-associated factors. One copy of each TAF1, TAF2, TAF3, TAF7, TAF8, TAF11, TAF13, two copies of each TAF4, TAF5, TAF6, TAF9, TAF10, TAF12, and three copies of TAF14.

It localises to the nucleus. Functions as a component of the DNA-binding general transcription factor complex TFIID. Binding of TFIID to a promoter (with or without TATA element) is the initial step in pre-initiation complex (PIC) formation. TFIID plays a key role in the regulation of gene expression by RNA polymerase II through different activities such as transcription activator interaction, core promoter recognition and selectivity, TFIIA and TFIIB interaction, chromatin modification (histone acetylation by TAF1), facilitation of DNA opening and initiation of transcription. This Saccharomyces cerevisiae (strain ATCC 204508 / S288c) (Baker's yeast) protein is Transcription initiation factor TFIID subunit 13 (TAF13).